Here is a 491-residue protein sequence, read N- to C-terminus: Ketol-acid reductoisomerase (NADP(+)) (491 aa).

Residues 15 to 208 (AQLGKCRFMG…GGHRAGVLES (194 aa)) enclose the KARI N-terminal Rossmann domain. Residues 45–48 (CGAQ), R68, R76, S78, and 108–110 (DKQ) each bind NADP(+). The active site involves H132. G158 contributes to the NADP(+) binding site. 2 KARI C-terminal knotted domains span residues 209–344 (SFVA…TAPQ) and 345–484 (FEGK…MTDM). Residues D217, E221, E389, and E393 each contribute to the Mg(2+) site. S414 is a binding site for substrate.

This sequence belongs to the ketol-acid reductoisomerase family. The cofactor is Mg(2+).

It catalyses the reaction (2R)-2,3-dihydroxy-3-methylbutanoate + NADP(+) = (2S)-2-acetolactate + NADPH + H(+). It carries out the reaction (2R,3R)-2,3-dihydroxy-3-methylpentanoate + NADP(+) = (S)-2-ethyl-2-hydroxy-3-oxobutanoate + NADPH + H(+). The protein operates within amino-acid biosynthesis; L-isoleucine biosynthesis; L-isoleucine from 2-oxobutanoate: step 2/4. Its pathway is amino-acid biosynthesis; L-valine biosynthesis; L-valine from pyruvate: step 2/4. Its function is as follows. Involved in the biosynthesis of branched-chain amino acids (BCAA). Catalyzes an alkyl-migration followed by a ketol-acid reduction of (S)-2-acetolactate (S2AL) to yield (R)-2,3-dihydroxy-isovalerate. In the isomerase reaction, S2AL is rearranged via a Mg-dependent methyl migration to produce 3-hydroxy-3-methyl-2-ketobutyrate (HMKB). In the reductase reaction, this 2-ketoacid undergoes a metal-dependent reduction by NADPH to yield (R)-2,3-dihydroxy-isovalerate. This is Ketol-acid reductoisomerase (NADP(+)) from Salmonella schwarzengrund (strain CVM19633).